We begin with the raw amino-acid sequence, 104 residues long: Iron-sulfur cluster assembly protein CyaY (104 aa).

Belongs to the frataxin family.

Its function is as follows. Involved in iron-sulfur (Fe-S) cluster assembly. May act as a regulator of Fe-S biogenesis. The chain is Iron-sulfur cluster assembly protein CyaY from Aeromonas hydrophila subsp. hydrophila (strain ATCC 7966 / DSM 30187 / BCRC 13018 / CCUG 14551 / JCM 1027 / KCTC 2358 / NCIMB 9240 / NCTC 8049).